The sequence spans 529 residues: MSQDTEVDMKEVELNELEPEKQPMNAASEAAVAMAVAGGAEKNGLVKIKVAEDEAEAAAKFTGLSKEELLKVAGSPGWVRTRWALLLLFWLGWIGMLAGAVVIIVRAPRCRELPVQRWWHKGALYRVGDLQAFQARDSGDLAGLKGHLDYLSTLKVKGLVLGPIHKNQEDDVAGTNLQEINPAVGSKEEFDSFLQSAKKKSIRVILDLTPNYLGQNSWFLPTQVDLVATKVKDALNFWLQAGVDGFQVRDVGNLTNAALHLAEWRNITKSFSEDRLLIAGTESSDLHQILSLLESTKDLLLTSSYLSASGVSGENMKFLVTQYLNATDSHWCSWSLSQAGLLTSFVPAQLLRLYQLLLFTLPGTPVFSYGDEIGLQAAALPGEPAKAPVMLWDESSLPSASVSANMTVKGQDEDSGSLLSLFRRLSDQRGKERSLLHGDFHALSTGSNLFSYVRHWDQNERFLVVLNFGDESLSARLGASSLPAGASLPARADLLLSTHPGREEGTSLALEHLNLEPHEGLLLHFPYVA.

A disordered region spans residues 1 to 20 (MSQDTEVDMKEVELNELEPE). At 1-84 (MSQDTEVDMK…SPGWVRTRWA (84 aa)) the chain is on the cytoplasmic side. At Ser-2 the chain carries Phosphoserine. Thr-5 carries the post-translational modification Phosphothreonine. Basic and acidic residues predominate over residues 7–20 (VDMKEVELNELEPE). Residue Lys-49 forms a Glycyl lysine isopeptide (Lys-Gly) (interchain with G-Cter in ubiquitin) linkage. Phosphoserine is present on Ser-65. Lys-66 is covalently cross-linked (Glycyl lysine isopeptide (Lys-Gly) (interchain with G-Cter in SUMO2)). The chain crosses the membrane as a helical; Signal-anchor for type II membrane protein span at residues 85-105 (LLLLFWLGWIGMLAGAVVIIV). The Extracellular segment spans residues 106–529 (RAPRCRELPV…GLLLHFPYVA (424 aa)). Asn-266 carries an N-linked (GlcNAc...) asparagine glycan. Residues Ser-307 and Ser-309 each carry the phosphoserine modification. 2 N-linked (GlcNAc...) asparagine glycosylation sites follow: Asn-325 and Asn-405. Ser-426 is subject to Phosphoserine.

It belongs to the SLC3A transporter family. Disulfide-linked heterodimer with a non-glycosylated light chain (SLC7A5, SLC7A6, SLC7A7, SLC7A8, SLC7A10 or SLC7A11). Interacts with TLCD3A/CT120 and ICAM1. Constitutively and specifically associates with beta-1 integrins (alpha-2/beta-1, alpha-3/beta-1, alpha-5/beta-1 and alpha-6/beta-1), but minimally with alpha-4/beta-1. Interacts with LAPTM4B; recruits SLC3A2 and SLC7A5 to lysosomes to promote leucine uptake into these organelles and is required for mTORC1 activation. Phosphorylation on Ser-307 or Ser-309 and on Ser-426 by ecto-protein kinases favors heterotypic cell-cell interactions. Post-translationally, N-glycosylated; N-glycosylation is crucial for trafficking and stability of SLC3A2 to the plasma membrane.

Its subcellular location is the apical cell membrane. It localises to the cell membrane. The protein resides in the cell junction. The protein localises to the lysosome membrane. It is found in the melanosome. Its subcellular location is the basolateral cell membrane. Functionally, acts as a chaperone that facilitates biogenesis and trafficking of functional transporters heterodimers to the plasma membrane. Forms heterodimer with SLC7 family transporters (SLC7A5, SLC7A6, SLC7A7, SLC7A8, SLC7A10 and SLC7A11), a group of amino-acid antiporters. Heterodimers function as amino acids exchangers, the specificity of the substrate depending on the SLC7A subunit. Heterodimers formed by SLC3A2/SLC7A6 or SLC3A2/SLC7A7 mediate the uptake of dibasic amino acids. Heterodimer SLC3A2/SLC7A11 functions as an antiporter by mediating the exchange of extracellular anionic L-cystine and intracellular L-glutamate across the cellular plasma membrane. SLC3A2/SLC7A10 translocates small neutral L- and D-amino acids across the plasma membrane. SLC3A2/SLC75 or SLC3A2/SLC7A8 translocates neutral amino acids with broad specificity, thyroid hormones and L-DOPA. SLC3A2 is essential for plasma membrane localization, stability, and the transport activity of SLC7A5 and SLC7A8. When associated with LAPTM4B, the heterodimer SLC7A5 is recruited to lysosomes to promote leucine uptake into these organelles, and thereby mediates mTORC1 activation. Modulates integrin-related signaling and is essential for integrin-dependent cell spreading, migration and tumor progression. In Oryctolagus cuniculus (Rabbit), this protein is Amino acid transporter heavy chain SLC3A2.